Reading from the N-terminus, the 301-residue chain is Cytosolic sulfotransferase 2 (301 aa).

53–58 (KAGTTW) serves as a coordination point for 3'-phosphoadenylyl sulfate. The Proton acceptor role is filled by histidine 115. Residues arginine 137, serine 145, tyrosine 201, 235–240 (VQFDVM), and 263–265 (RKG) each bind 3'-phosphoadenylyl sulfate.

Belongs to the sulfotransferase 1 family. Expressed in liver.

Its subcellular location is the cytoplasm. Its activity is regulated as follows. Inhibited by Co(2+), Zn(2+), Cd(2+) and Pb(2+) ions. Inactivated by Hg(2+) and Cu(2+) ions. Sulfotransferase that utilizes 3'-phospho-5'-adenylyl sulfate (PAPS) as sulfonate donor to catalyze the sulfate conjugation of a variety of xenobiotic and endogenous compounds, including 2-naphthol, hydroxychlorobiphenyls, T3 (triiodo-L-thyronine), T4 (thyroxine), estrone and DOPA. The chain is Cytosolic sulfotransferase 2 from Danio rerio (Zebrafish).